The primary structure comprises 106 residues: MAELISIDDTIDTAYDIFLEMAPDNLEPADVILFTAQFDDRGAAELVDVGDDWDDQVGFEVDKEIYAEVRIGLVNEENDVLDDVFARMLISRDPDQKFCHMLWKRD.

This sequence belongs to the putative dsDNA mimic protein family.

Its function is as follows. May act as a double-stranded DNA (dsDNA) mimic. Probably regulates the activity of a dsDNA-binding protein. The sequence is that of Putative double-stranded DNA mimic protein VCM66_1163 from Vibrio cholerae serotype O1 (strain M66-2).